A 77-amino-acid polypeptide reads, in one-letter code: DNA-directed RNA polymerase subunit Rpo10 (77 aa).

Residues Cys7, Cys10, Cys44, and Cys45 each coordinate Zn(2+).

The protein belongs to the archaeal Rpo10/eukaryotic RPB10 RNA polymerase subunit family. In terms of assembly, part of the RNA polymerase complex. Zn(2+) serves as cofactor.

The protein localises to the cytoplasm. The enzyme catalyses RNA(n) + a ribonucleoside 5'-triphosphate = RNA(n+1) + diphosphate. DNA-dependent RNA polymerase (RNAP) catalyzes the transcription of DNA into RNA using the four ribonucleoside triphosphates as substrates. This is DNA-directed RNA polymerase subunit Rpo10 from Aeropyrum pernix (strain ATCC 700893 / DSM 11879 / JCM 9820 / NBRC 100138 / K1).